Consider the following 235-residue polypeptide: Protein RESISTANCE TO PHYTOPHTHORA 1, chloroplastic (235 aa).

A chloroplast-targeting transit peptide spans 1–43; that stretch reads MNSATTMSASVLNYQILKFFPPQKNGFLKSPLIRGKICRFCVS. Basic and acidic residues predominate over residues 53-66; sequence VIEDPKEETQEKSD. The segment at 53–92 is disordered; sequence VIEDPKEETQEKSDGVIVNSTEEEEERSGENSTSTGPSTV. A run of 4 helical transmembrane segments spans residues 131 to 151, 158 to 178, 188 to 208, and 211 to 231; these read FEVQAYASMLIGGALSFNLIF, IWRLMGMWSIWMFTIPSLRAR, LNYLFLLVPLLNVAIPFFLKS, and VVWSADTVAFLGMYAWKLGWL.

It localises to the plastid. The protein resides in the chloroplast. The protein localises to the membrane. Its function is as follows. Plays a positive role in the immune response to the oomycetes P.infestans, including induced oxidative burst and enhanced expression of defense-related genes. In Solanum tuberosum (Potato), this protein is Protein RESISTANCE TO PHYTOPHTHORA 1, chloroplastic.